We begin with the raw amino-acid sequence, 533 residues long: Cytochrome P450 monooxygenase calL (533 aa).

Residues Thr-8–Pro-28 traverse the membrane as a helical segment. Asn-33 carries an N-linked (GlcNAc...) asparagine glycan. A disordered region spans residues Gly-123–Arg-148. A glycan (N-linked (GlcNAc...) asparagine) is linked at Asn-388. A heme-binding site is contributed by Cys-467.

This sequence belongs to the cytochrome P450 family. Heme serves as cofactor.

It is found in the membrane. Its pathway is secondary metabolite biosynthesis. Functionally, cytochrome P450 monooxygenase; part of the gene cluster that mediates the biosynthesis of calbistrin A and related compounds. Calbistrin A is a secondary metabolite with an interesting structure that was recently found to have bioactivity against leukemia cells. It consists of two polyketides linked by an ester bond: a bicyclic decalin containing polyketide and a linear 12 carbon dioic acid structure. The polyketide synthase calA is probably responsible for forming the decalin moiety. Because calA lacks a designated enoylreductase (ER) domain, the required activity is provided by the trans-enoyl reductase calK. Following release from the PKS, calF then probably catalyzes the oxidation and the subsequent Diels Alder cycloisomerization that lead to the formation of the decalin moiety. The decalin polyketide backbone includes two C-methyl groups, at C7 and C11 in backbone, of which the C7 position is probably methylated by the methyltransferase domain of calA. A candidate for adding the methyl group at C11, if not done by CalA, is the cluster methyltransferase calH. Several additional tailoring enzymes within the cluster could be involved in the modification of the decalin polyketide product. Those include the 3 cytochrome P450 monooxygenases CalE, CalG and CalL, of which one might be responsible for the introduction of the extra hydroxyl group attached to the backbone of the decalin moiety, at position C9 in the backbone, that allows for attachment of the linear moiety. One tailoring enzyme activity that is expected to be involved in biosynthesis of calbistrin is an acyltransferase for connecting the two polyketide synthase products, and which could be performed by the cluster acyltransferase calJ. The enzyme responsible for the biosynthesis of the linear moiety, probably a second PKS, has not been identified yet. In Penicillium decumbens, this protein is Cytochrome P450 monooxygenase calL.